We begin with the raw amino-acid sequence, 347 residues long: Haptoglobin (347 aa).

The first 18 residues, 1 to 18 (MRALGAVITLLLWGQLFA), serve as a signal peptide directing secretion. Positions 31 to 88 (DSCPKPPEIANGYVEHLVRYQCKNYYRLRTEGDGVYALNSEKQWVNKAVGEQLPECEA) constitute a Sushi domain. Intrachain disulfides connect Cys52–Cys86 and Cys90–Cys207. The region spanning 103–345 (IIGGSLDAKG…ILDWIQKTIA (243 aa)) is the Peptidase S1 domain. Residues Asn148, Asn152, Asn182, Asn230, and Asn256 are each glycosylated (N-linked (GlcNAc...) asparagine). 2 cysteine pairs are disulfide-bonded: Cys250–Cys281 and Cys292–Cys322. An interaction with CD163 region spans residues 259-264 (VPENKI).

It belongs to the peptidase S1 family. As to quaternary structure, tetramer of two alpha and two beta chains; disulfide-linked. The hemoglobin/haptoglobin complex is composed of a haptoglobin dimer bound to two hemoglobin alpha-beta dimers. Interacts with CD163. Interacts with ERGIC3. Expressed by the liver and secreted in plasma.

It is found in the secreted. As a result of hemolysis, hemoglobin is found to accumulate in the kidney and is secreted in the urine. Haptoglobin captures, and combines with free plasma hemoglobin to allow hepatic recycling of heme iron and to prevent kidney damage. Haptoglobin also acts as an antioxidant, has antibacterial activity and plays a role in modulating many aspects of the acute phase response. Hemoglobin/haptoglobin complexes are rapidly cleared by the macrophage CD163 scavenger receptor expressed on the surface of liver Kupfer cells through an endocytic lysosomal degradation pathway. This is Haptoglobin (HP) from Oryctolagus cuniculus (Rabbit).